The primary structure comprises 434 residues: Anaerobic glycerol-3-phosphate dehydrogenase subunit B (434 aa).

This sequence belongs to the anaerobic G-3-P dehydrogenase subunit B family. As to quaternary structure, composed of a catalytic GlpA/B dimer and of membrane bound GlpC. FMN is required as a cofactor.

It carries out the reaction a quinone + sn-glycerol 3-phosphate = dihydroxyacetone phosphate + a quinol. The protein operates within polyol metabolism; glycerol degradation via glycerol kinase pathway; glycerone phosphate from sn-glycerol 3-phosphate (anaerobic route): step 1/1. Its function is as follows. Conversion of glycerol 3-phosphate to dihydroxyacetone. Uses fumarate or nitrate as electron acceptor. The polypeptide is Anaerobic glycerol-3-phosphate dehydrogenase subunit B (Histophilus somni (strain 2336) (Haemophilus somnus)).